A 248-amino-acid polypeptide reads, in one-letter code: Exosome complex component Rrp41 (248 aa).

The protein belongs to the RNase PH family. Rrp41 subfamily. As to quaternary structure, component of the archaeal exosome complex. Forms a hexameric ring-like arrangement composed of 3 Rrp41-Rrp42 heterodimers. The hexameric ring associates with a trimer of Rrp4 and/or Csl4 subunits.

The protein localises to the cytoplasm. Catalytic component of the exosome, which is a complex involved in RNA degradation. Has 3'-&gt;5' exoribonuclease activity. Can also synthesize heteromeric RNA-tails. The polypeptide is Exosome complex component Rrp41 (Thermoplasma volcanium (strain ATCC 51530 / DSM 4299 / JCM 9571 / NBRC 15438 / GSS1)).